The following is a 314-amino-acid chain: METIRPLKFGTLSLPDRESRLVCRSILLDMLGEATIAPDEGDLTGVTGLFWKYVSLSLATVYFPRTMLRVNASGMGDSGVVILRAMDSPLVIRHRRIKVEAARADVIFLPSDASSEITLPEGGRFDCAHLPAYALASKRDLLKPIMMQPLAAECLPLQLLTNYAGYLLRQEYQSEEHAGMMVAHFYDLLPVLAQDIGNVSPRETPHNRMASIKMRVEQNLANGSFSITDVAEAERITPRAIQKFFSREGTTFSRYVLGRRLSLAKSLILAEGEATSISQIAYNVGFNDLSYFNRTFRSRYGVRPSDLRRLAAAA.

Positions 210–310 (ASIKMRVEQN…GVRPSDLRRL (101 aa)) constitute an HTH araC/xylS-type domain. 2 DNA-binding regions (H-T-H motif) span residues 228–249 (TDVA…SREG) and 277–300 (ISQI…RSRY).

Its function is as follows. Transcriptional activator of the rhizobactin regulon. This is Transcriptional activator RhrA (rhrA) from Rhizobium meliloti (strain 1021) (Ensifer meliloti).